The primary structure comprises 279 residues: Undecaprenyl-diphosphatase (279 aa).

Helical transmembrane passes span Thr17–Phe37, Ala46–Leu66, Phe92–Leu112, Ser123–Val143, Ile156–Val176, Ala197–Tyr217, Glu226–Ile246, and Ser257–Val277.

Belongs to the UppP family.

Its subcellular location is the cell inner membrane. It catalyses the reaction di-trans,octa-cis-undecaprenyl diphosphate + H2O = di-trans,octa-cis-undecaprenyl phosphate + phosphate + H(+). Catalyzes the dephosphorylation of undecaprenyl diphosphate (UPP). Confers resistance to bacitracin. In Leptospira biflexa serovar Patoc (strain Patoc 1 / ATCC 23582 / Paris), this protein is Undecaprenyl-diphosphatase.